The sequence spans 680 residues: Multidrug resistance protein MdtO (680 aa).

A run of 9 helical transmembrane segments spans residues 43–63, 75–95, 100–120, 125–145, 155–175, 399–419, 423–443, 454–474, and 480–500; these read VILI…AVLF, FVAI…FLIY, GEPL…MFLM, LGLV…MLDY, WCIV…VLWF, FGGA…VMPW, IVEL…IATS, MVVT…YDLV, and ALGI…VWPE.

It belongs to the MdtO family. As to quaternary structure, could be part of a tripartite efflux system composed of MdtN, MdtO and MdtP.

Its subcellular location is the cell inner membrane. Could be involved in resistance to puromycin, acriflavine and tetraphenylarsonium chloride. The polypeptide is Multidrug resistance protein MdtO (mdtO) (Shigella flexneri).